Reading from the N-terminus, the 228-residue chain is MLHVEMLTLVFLVLWMCVFSQDPGSKAVADRYAVYWNSSNPRFQRGDYHIDVCINDYLDVFCPHYEDSVPEDKTERYVLYMVNFDGYSACDHTSKGFKRWECNRPHSPNGPLKFSEKFQLFTPFSLGFEFRPGREYFYISSAIPDNGRRSCLKLKVFVRPTNSCMKTIGVHDRVFDVNDKVENSLEPADDTVHESAEPSRGENAAQTPRIPSRLLAILLFLLAMLLTL.

The N-terminal stretch at 1–20 (MLHVEMLTLVFLVLWMCVFS) is a signal peptide. One can recognise an Ephrin RBD domain in the interval 29–162 (ADRYAVYWNS…KLKVFVRPTN (134 aa)). The N-linked (GlcNAc...) asparagine glycan is linked to Asn37. Disulfide bonds link Cys62–Cys102 and Cys90–Cys151. The segment at 186–205 (EPADDTVHESAEPSRGENAA) is disordered. The span at 190–200 (DTVHESAEPSR) shows a compositional bias: basic and acidic residues. Asn203 is lipidated: GPI-anchor amidated asparagine. Residues 204-228 (AAQTPRIPSRLLAILLFLLAMLLTL) constitute a propeptide, removed in mature form.

This sequence belongs to the ephrin family. Binds to EPHB2. Interacts with EPHA8; activates EPHA8. Binds to the receptor tyrosine kinases EPHA2, EPHA3 and EPHB1. Forms a ternary EFNA5-EPHA3-ADAM10 complex mediating EFNA5 extracellular domain shedding by ADAM10 which regulates the EFNA5-EPHA3 complex internalization and function.

It localises to the cell membrane. Its subcellular location is the membrane. The protein localises to the caveola. Functionally, cell surface GPI-bound ligand for Eph receptors, a family of receptor tyrosine kinases which are crucial for migration, repulsion and adhesion during neuronal, vascular and epithelial development. Binds promiscuously Eph receptors residing on adjacent cells, leading to contact-dependent bidirectional signaling into neighboring cells. The signaling pathway downstream of the receptor is referred to as forward signaling while the signaling pathway downstream of the ephrin ligand is referred to as reverse signaling. Induces compartmentalized signaling within a caveolae-like membrane microdomain when bound to the extracellular domain of its cognate receptor. This signaling event requires the activity of the Fyn tyrosine kinase. Activates the EPHA3 receptor to regulate cell-cell adhesion and cytoskeletal organization. With the receptor EPHA2 may regulate lens fiber cells shape and interactions and be important for lens transparency maintenance. May function actively to stimulate axon fasciculation. The interaction of EFNA5 with EPHA5 also mediates communication between pancreatic islet cells to regulate glucose-stimulated insulin secretion. Cognate/functional ligand for EPHA7, their interaction regulates brain development modulating cell-cell adhesion and repulsion. In Homo sapiens (Human), this protein is Ephrin-A5 (EFNA5).